The primary structure comprises 156 residues: Endoribonuclease YbeY (156 aa).

Zn(2+)-binding residues include histidine 122, histidine 126, and histidine 132.

It belongs to the endoribonuclease YbeY family. Zn(2+) is required as a cofactor.

It localises to the cytoplasm. In terms of biological role, single strand-specific metallo-endoribonuclease involved in late-stage 70S ribosome quality control and in maturation of the 3' terminus of the 16S rRNA. The protein is Endoribonuclease YbeY of Bacillus cereus (strain ATCC 10987 / NRS 248).